The following is a 339-amino-acid chain: Anthranilate phosphoribosyltransferase (339 aa).

5-phospho-alpha-D-ribose 1-diphosphate-binding positions include Gly80, 83–84 (GD), Thr88, 90–93 (NIST), 108–116 (KHGNRAMSS), and Ser120. An anthranilate-binding site is contributed by Gly80. Ser92 is a Mg(2+) binding site. Asn111 is an anthranilate binding site. Arg166 lines the anthranilate pocket. Residues Asp225 and Glu226 each coordinate Mg(2+).

Belongs to the anthranilate phosphoribosyltransferase family. In terms of assembly, homodimer. It depends on Mg(2+) as a cofactor.

The catalysed reaction is N-(5-phospho-beta-D-ribosyl)anthranilate + diphosphate = 5-phospho-alpha-D-ribose 1-diphosphate + anthranilate. It participates in amino-acid biosynthesis; L-tryptophan biosynthesis; L-tryptophan from chorismate: step 2/5. Catalyzes the transfer of the phosphoribosyl group of 5-phosphorylribose-1-pyrophosphate (PRPP) to anthranilate to yield N-(5'-phosphoribosyl)-anthranilate (PRA). This is Anthranilate phosphoribosyltransferase from Chloroflexus aurantiacus (strain ATCC 29366 / DSM 635 / J-10-fl).